Consider the following 453-residue polypeptide: Trigger factor (453 aa).

The PPIase FKBP-type domain occupies 171 to 256; it reads GDRVTINFKG…ATSIEAPQDI (86 aa).

The protein belongs to the FKBP-type PPIase family. Tig subfamily.

Its subcellular location is the cytoplasm. The catalysed reaction is [protein]-peptidylproline (omega=180) = [protein]-peptidylproline (omega=0). In terms of biological role, involved in protein export. Acts as a chaperone by maintaining the newly synthesized protein in an open conformation. Functions as a peptidyl-prolyl cis-trans isomerase. The protein is Trigger factor of Bradyrhizobium diazoefficiens (strain JCM 10833 / BCRC 13528 / IAM 13628 / NBRC 14792 / USDA 110).